Reading from the N-terminus, the 311-residue chain is Methionyl-tRNA formyltransferase (311 aa).

109–112 serves as a coordination point for (6S)-5,6,7,8-tetrahydrofolate; sequence SLLP.

This sequence belongs to the Fmt family.

The enzyme catalyses L-methionyl-tRNA(fMet) + (6R)-10-formyltetrahydrofolate = N-formyl-L-methionyl-tRNA(fMet) + (6S)-5,6,7,8-tetrahydrofolate + H(+). Its function is as follows. Attaches a formyl group to the free amino group of methionyl-tRNA(fMet). The formyl group appears to play a dual role in the initiator identity of N-formylmethionyl-tRNA by promoting its recognition by IF2 and preventing the misappropriation of this tRNA by the elongation apparatus. The polypeptide is Methionyl-tRNA formyltransferase (Staphylococcus aureus (strain JH1)).